Here is a 671-residue protein sequence, read N- to C-terminus: Protein KHNYN (671 aa).

Disordered stretches follow at residues Arg-234 to Glu-274, Glu-294 to Pro-327, His-344 to Leu-402, and Gly-577 to Arg-626. A compositionally biased stretch (basic and acidic residues) spans Thr-250 to Ser-272. The span at Pro-351–Pro-365 shows a compositional bias: pro residues. Ser-355 bears the Phosphoserine mark. A compositionally biased stretch (basic and acidic residues) spans Gly-367–Lys-381. The RNase NYN domain maps to Leu-430 to Glu-582. Residues Gln-591–Gly-612 are compositionally biased toward polar residues.

It belongs to the N4BP1 family.

This chain is Protein KHNYN (Khnyn), found in Mus musculus (Mouse).